A 254-amino-acid polypeptide reads, in one-letter code: MTPQRIGFVASPAPVAQEALVAMEARYGQCPLPEAEVIVALGGDGFMLQTLHETQSLDIPVYGMNRGTVGFLMNGYAGDGLRERLAEAEEEILNPLVMTAVTEAGEVFHRIAINEVSLLRAGPQAAWLKISVDGKVRMEELVCDGALVCTPAGSTAYNYSAHGPILPIGADVLALTAIAPFRPRRWRGALLPKTATVRFDVIDARKRPVMADADGRSVRDVVSVEVRSEPAIRHRLLFDPGHGLEERLIREQFV.

The active-site Proton acceptor is the D44. NAD(+)-binding positions include 44–45, 114–115, D144, A152, 155–160, and A179; these read DG, NE, and TAYNYS.

It belongs to the NAD kinase family. The cofactor is a divalent metal cation.

It localises to the cytoplasm. It catalyses the reaction NAD(+) + ATP = ADP + NADP(+) + H(+). Functionally, involved in the regulation of the intracellular balance of NAD and NADP, and is a key enzyme in the biosynthesis of NADP. Catalyzes specifically the phosphorylation on 2'-hydroxyl of the adenosine moiety of NAD to yield NADP. The chain is NAD kinase from Cereibacter sphaeroides (strain ATCC 17025 / ATH 2.4.3) (Rhodobacter sphaeroides).